Reading from the N-terminus, the 118-residue chain is Large ribosomal subunit protein bL19 (118 aa).

Belongs to the bacterial ribosomal protein bL19 family.

Its function is as follows. This protein is located at the 30S-50S ribosomal subunit interface and may play a role in the structure and function of the aminoacyl-tRNA binding site. The sequence is that of Large ribosomal subunit protein bL19 from Parafrankia sp. (strain EAN1pec).